A 508-amino-acid chain; its full sequence is Photosystem II CP47 reaction center protein (508 aa).

Helical transmembrane passes span 21–36, 101–115, 140–156, 203–218, 237–252, and 457–472; these read SVHI…WAGS, IVFS…IWHW, GIHL…FGVF, IAAG…FHLS, VLSS…AFVV, and SFAL…HGAR.

The protein belongs to the PsbB/PsbC family. PsbB subfamily. PSII is composed of 1 copy each of membrane proteins PsbA, PsbB, PsbC, PsbD, PsbE, PsbF, PsbH, PsbI, PsbJ, PsbK, PsbL, PsbM, PsbT, PsbX, PsbY, PsbZ, Psb30/Ycf12, at least 3 peripheral proteins of the oxygen-evolving complex and a large number of cofactors. It forms dimeric complexes. The cofactor is Binds multiple chlorophylls. PSII binds additional chlorophylls, carotenoids and specific lipids..

It is found in the plastid. Its subcellular location is the chloroplast thylakoid membrane. Its function is as follows. One of the components of the core complex of photosystem II (PSII). It binds chlorophyll and helps catalyze the primary light-induced photochemical processes of PSII. PSII is a light-driven water:plastoquinone oxidoreductase, using light energy to abstract electrons from H(2)O, generating O(2) and a proton gradient subsequently used for ATP formation. This chain is Photosystem II CP47 reaction center protein, found in Jasminum nudiflorum (Winter jasmine).